Consider the following 239-residue polypeptide: ATP-dependent dethiobiotin synthetase BioD (239 aa).

An ATP-binding site is contributed by Glu13–Val18. Position 17 (Thr17) interacts with Mg(2+). Lys38 is a catalytic residue. Thr42 provides a ligand contact to substrate. Residues Lys59 and Glu111 each coordinate Mg(2+). ATP is bound by residues Glu111–Gly114, Asn175–Gln176, and Pro204–Leu206.

Belongs to the dethiobiotin synthetase family. As to quaternary structure, homodimer. It depends on Mg(2+) as a cofactor.

The protein localises to the cytoplasm. It carries out the reaction (7R,8S)-7,8-diammoniononanoate + CO2 + ATP = (4R,5S)-dethiobiotin + ADP + phosphate + 3 H(+). Its pathway is cofactor biosynthesis; biotin biosynthesis; biotin from 7,8-diaminononanoate: step 1/2. Its function is as follows. Catalyzes a mechanistically unusual reaction, the ATP-dependent insertion of CO2 between the N7 and N8 nitrogen atoms of 7,8-diaminopelargonic acid (DAPA, also called 7,8-diammoniononanoate) to form a ureido ring. The chain is ATP-dependent dethiobiotin synthetase BioD from Geobacillus sp. (strain WCH70).